A 117-amino-acid polypeptide reads, in one-letter code: Hainantoxin-XV-3 (117 aa).

The N-terminal stretch at 1 to 20 (MKLCAVIIASLLVCVAVASS) is a signal peptide. Residues 20 to 55 (SSDNQKEFAQEKEMTREETQSLGEHEKDDEVTGSEE) form a disordered region. Residues 21–56 (SDNQKEFAQEKEMTREETQSLGEHEKDDEVTGSEER) constitute a propeptide that is removed on maturation. Basic and acidic residues predominate over residues 23–55 (NQKEFAQEKEMTREETQSLGEHEKDDEVTGSEE). 4 disulfide bridges follow: C58/C72, C65/C78, C69/C115, and C71/C91.

The protein belongs to the neurotoxin 03 (Tx2) family. 02 subfamily. HNTX-XV sub-subfamily. As to expression, expressed by the venom gland.

The protein resides in the secreted. Its function is as follows. Putative ion channel inhibitor. This chain is Hainantoxin-XV-3, found in Cyriopagopus hainanus (Chinese bird spider).